A 687-amino-acid polypeptide reads, in one-letter code: TWiK family of potassium channels protein 12 (687 aa).

Over 1–21 (MTLFQKLQWFCQLIRLRAYYK) the chain is Cytoplasmic. The chain crosses the membrane as a helical span at residues 22–42 (FLLLIAYTLFGAWLFRFYELQ). N-linked (GlcNAc...) asparagine glycosylation is found at Asn53, Asn77, and Asn98. The segment at residues 112-132 (WTWTGAMFYAGQLYTTIGYGY) is an intramembrane region (pore-forming). Residues 142–162 (ICTVLYALFGIPCFLMYLKAI) traverse the membrane as a helical segment. The Cytoplasmic segment spans residues 163 to 212 (GKTLSKRLKKIYKRVRRSAFGKFLLPTRVTATKDGFEDPDASAEERKRKP). A helical transmembrane segment spans residues 213 to 233 (FPIPIAIILLIIWICFSASMF). The segment at residues 242-262 (FPSAVYFFIVSISTVGLGDML) is an intramembrane region (pore-forming). Residues 270–290 (VFNFLLILFGLALLSMCFELI) traverse the membrane as a helical segment. Topologically, residues 291-687 (TDRIAKWKQK…SKRDAPVNIV (397 aa)) are cytoplasmic. The segment at 661–687 (SPSTSTSTSMIDSGYDLSKRDAPVNIV) is disordered. Residues 677–687 (LSKRDAPVNIV) are compositionally biased toward basic and acidic residues.

This sequence belongs to the two pore domain potassium channel (TC 1.A.1.8) family.

It is found in the membrane. This Caenorhabditis briggsae protein is TWiK family of potassium channels protein 12.